The chain runs to 132 residues: S-adenosylmethionine decarboxylase proenzyme (132 aa).

Ser65 functions as the Schiff-base intermediate with substrate; via pyruvic acid in the catalytic mechanism. The residue at position 65 (Ser65) is a Pyruvic acid (Ser); by autocatalysis. Residue His70 is the Proton acceptor; for processing activity of the active site. Cys85 acts as the Proton donor; for catalytic activity in catalysis.

The protein belongs to the prokaryotic AdoMetDC family. Type 1 subfamily. In terms of assembly, heterotetramer of two alpha and two beta chains arranged as a dimer of alpha/beta heterodimers. Pyruvate is required as a cofactor. Is synthesized initially as an inactive proenzyme. Formation of the active enzyme involves a self-maturation process in which the active site pyruvoyl group is generated from an internal serine residue via an autocatalytic post-translational modification. Two non-identical subunits are generated from the proenzyme in this reaction, and the pyruvate is formed at the N-terminus of the alpha chain, which is derived from the carboxyl end of the proenzyme. The post-translation cleavage follows an unusual pathway, termed non-hydrolytic serinolysis, in which the side chain hydroxyl group of the serine supplies its oxygen atom to form the C-terminus of the beta chain, while the remainder of the serine residue undergoes an oxidative deamination to produce ammonia and the pyruvoyl group blocking the N-terminus of the alpha chain.

It carries out the reaction S-adenosyl-L-methionine + H(+) = S-adenosyl 3-(methylsulfanyl)propylamine + CO2. It functions in the pathway amine and polyamine biosynthesis; S-adenosylmethioninamine biosynthesis; S-adenosylmethioninamine from S-adenosyl-L-methionine: step 1/1. Its function is as follows. Catalyzes the decarboxylation of S-adenosylmethionine to S-adenosylmethioninamine (dcAdoMet), the propylamine donor required for the synthesis of the polyamines spermine and spermidine from the diamine putrescine. This is S-adenosylmethionine decarboxylase proenzyme from Symbiobacterium thermophilum (strain DSM 24528 / JCM 14929 / IAM 14863 / T).